A 280-amino-acid polypeptide reads, in one-letter code: Shikimate dehydrogenase (NADP(+)) (280 aa).

Shikimate-binding positions include S15–S17 and T62. K66 (proton acceptor) is an active-site residue. E78 is an NADP(+) binding site. Shikimate contacts are provided by N87 and D102. NADP(+)-binding positions include G127–A131, N151–K156, and I219. Y221 is a shikimate binding site. G242 lines the NADP(+) pocket.

This sequence belongs to the shikimate dehydrogenase family. Homodimer.

The enzyme catalyses shikimate + NADP(+) = 3-dehydroshikimate + NADPH + H(+). It functions in the pathway metabolic intermediate biosynthesis; chorismate biosynthesis; chorismate from D-erythrose 4-phosphate and phosphoenolpyruvate: step 4/7. In terms of biological role, involved in the biosynthesis of the chorismate, which leads to the biosynthesis of aromatic amino acids. Catalyzes the reversible NADPH linked reduction of 3-dehydroshikimate (DHSA) to yield shikimate (SA). The polypeptide is Shikimate dehydrogenase (NADP(+)) (Bacillus subtilis (strain 168)).